The sequence spans 95 residues: Aspartyl/glutamyl-tRNA(Asn/Gln) amidotransferase subunit C (95 aa).

Belongs to the GatC family. As to quaternary structure, heterotrimer of A, B and C subunits.

It catalyses the reaction L-glutamyl-tRNA(Gln) + L-glutamine + ATP + H2O = L-glutaminyl-tRNA(Gln) + L-glutamate + ADP + phosphate + H(+). It carries out the reaction L-aspartyl-tRNA(Asn) + L-glutamine + ATP + H2O = L-asparaginyl-tRNA(Asn) + L-glutamate + ADP + phosphate + 2 H(+). Functionally, allows the formation of correctly charged Asn-tRNA(Asn) or Gln-tRNA(Gln) through the transamidation of misacylated Asp-tRNA(Asn) or Glu-tRNA(Gln) in organisms which lack either or both of asparaginyl-tRNA or glutaminyl-tRNA synthetases. The reaction takes place in the presence of glutamine and ATP through an activated phospho-Asp-tRNA(Asn) or phospho-Glu-tRNA(Gln). This chain is Aspartyl/glutamyl-tRNA(Asn/Gln) amidotransferase subunit C, found in Bartonella bacilliformis (strain ATCC 35685 / KC583 / Herrer 020/F12,63).